We begin with the raw amino-acid sequence, 522 residues long: ATP synthase subunit alpha 2 (522 aa).

Position 176–183 (176–183) interacts with ATP; the sequence is GDRQTGKT.

It belongs to the ATPase alpha/beta chains family. F-type ATPases have 2 components, CF(1) - the catalytic core - and CF(0) - the membrane proton channel. CF(1) has five subunits: alpha(3), beta(3), gamma(1), delta(1), epsilon(1). CF(0) has three main subunits: a(1), b(2) and c(9-12). The alpha and beta chains form an alternating ring which encloses part of the gamma chain. CF(1) is attached to CF(0) by a central stalk formed by the gamma and epsilon chains, while a peripheral stalk is formed by the delta and b chains.

The protein localises to the cell inner membrane. The enzyme catalyses ATP + H2O + 4 H(+)(in) = ADP + phosphate + 5 H(+)(out). In terms of biological role, produces ATP from ADP in the presence of a proton gradient across the membrane. The alpha chain is a regulatory subunit. The sequence is that of ATP synthase subunit alpha 2 from Syntrophotalea carbinolica (strain DSM 2380 / NBRC 103641 / GraBd1) (Pelobacter carbinolicus).